We begin with the raw amino-acid sequence, 238 residues long: MGRKWANIVAKKTAKDGATSKVYAKFGVEIYVAAKQGEPDPELNTALKFVIDRAKQAQVPKHVIDKAIDKAKGNTDETFVEGRYEGFGPNGSMIIVDTLTSNVNRTAANVRTAYGKNGGNMGASGSVSYLFDKKGVIVFAGDDADSVFEQLLEADVDVDDVEAEEGTITVYTAPTDLHKGIQALRDNGVEEFQVTELEMIPQSEVVLEGDDLETFEKLIDALESDDDVQKVYHNVADL.

Belongs to the TACO1 family. YeeN subfamily.

The protein resides in the cytoplasm. The chain is Probable transcriptional regulatory protein M6_Spy0297 from Streptococcus pyogenes serotype M6 (strain ATCC BAA-946 / MGAS10394).